Consider the following 434-residue polypeptide: Mitochondrial distribution and morphology protein 10 (434 aa).

The protein belongs to the MDM10 family. As to quaternary structure, component of the ER-mitochondria encounter structure (ERMES) or MDM complex, composed of mmm1, mdm10, mdm12 and mdm34. Associates with the mitochondrial outer membrane sorting assembly machinery SAM(core) complex.

Its subcellular location is the mitochondrion outer membrane. Its function is as follows. Component of the ERMES/MDM complex, which serves as a molecular tether to connect the endoplasmic reticulum and mitochondria. Components of this complex are involved in the control of mitochondrial shape and protein biogenesis and may function in phospholipid exchange. mdm10 is involved in the late assembly steps of the general translocase of the mitochondrial outer membrane (TOM complex). Functions in the tom40-specific route of the assembly of outer membrane beta-barrel proteins, including the association of tom40 with the receptor tom22 and small TOM proteins. Can associate with the SAM(core) complex as well as the mdm12-mmm1 complex, both involved in late steps of the major beta-barrel assembly pathway, that is responsible for biogenesis of all outer membrane beta-barrel proteins. May act as a switch that shuttles between both complexes and channels precursor proteins into the tom40-specific pathway. Plays a role in mitochondrial morphology and in the inheritance of mitochondria. The sequence is that of Mitochondrial distribution and morphology protein 10 (mdmB) from Aspergillus niger (strain ATCC MYA-4892 / CBS 513.88 / FGSC A1513).